The sequence spans 1055 residues: Auxin response factor 16 (1055 aa).

Positions 127 to 229 (FCKTLTASDT…QLLLGIRRAT (103 aa)) form a DNA-binding region, TF-B3. Disordered stretches follow at residues 485–510 (PVMSQHQQQPHQLSQQQQVQPSQQSS), 532–565 (QEHLQRQQSQPAQQLKAASSLHSVEQHKLKEQTS), 585–609 (SQLQQLGLPKSPTHRQGLTGLPIAG), 701–720 (SDSIGQLKQSPSQQAPLNHM), and 732–769 (SHSALAESGDPSSSTAPSTSRISPINSLSRANQGSRNL). Composition is skewed to low complexity over residues 488–510 (SQHQQQPHQLSQQQQVQPSQQSS) and 532–552 (QEHLQRQQSQPAQQLKAASSL). A compositionally biased stretch (low complexity) spans 742 to 756 (PSSSTAPSTSRISPI). Over residues 757 to 769 (NSLSRANQGSRNL) the composition is skewed to polar residues. The 85-residue stretch at 940 to 1024 (RTFTKVQKRG…KSIKILSAAE (85 aa)) folds into the PB1 domain. The interval 1034 to 1055 (LGGVPPQTQACSASDDANAWRG) is disordered.

It belongs to the ARF family. In terms of assembly, homodimers and heterodimers. In terms of tissue distribution, expressed in roots, culms, leaves and young panicles.

It localises to the nucleus. Auxin response factors (ARFs) are transcriptional factors that bind specifically to the DNA sequence 5'-TGTCTC-3' found in the auxin-responsive promoter elements (AuxREs). This is Auxin response factor 16 (ARF16) from Oryza sativa subsp. japonica (Rice).